The sequence spans 244 residues: Transcriptional activator protein FnrA (244 aa).

The 74-residue stretch at 159–232 folds into the HTH crp-type domain; sequence KTADERIATF…GKEVRILDSI (74 aa). Positions 192–211 form a DNA-binding region, H-T-H motif; sequence RNEIGNYLGLAVETVSRVFT.

In terms of biological role, transcriptional regulator of arginine deiminase. This chain is Transcriptional activator protein FnrA (fnrA), found in Stutzerimonas stutzeri (Pseudomonas stutzeri).